A 125-amino-acid chain; its full sequence is Histone H2A.v3 (125 aa).

Belongs to the histone H2A family. As to quaternary structure, the nucleosome is a histone octamer containing two molecules each of H2A, H2B, H3 and H4 assembled in one H3-H4 heterotetramer and two H2A-H2B heterodimers. The octamer wraps approximately 147 bp of DNA.

It is found in the nucleus. It localises to the chromosome. Functionally, core component of nucleosome which plays a central role in DNA double strand break (DSB) repair. Nucleosomes wrap and compact DNA into chromatin, limiting DNA accessibility to the cellular machineries which require DNA as a template. Histones thereby play a central role in transcription regulation, DNA repair, DNA replication and chromosomal stability. DNA accessibility is regulated via a complex set of post-translational modifications of histones, also called histone code, and nucleosome remodeling. This chain is Histone H2A.v3 (H2Av3), found in Dictyostelium discoideum (Social amoeba).